Reading from the N-terminus, the 324-residue chain is Endochitinase A2 (324 aa).

The N-terminal stretch at 1 to 20 (MSKLRIPILLVLFIVSCCSA) is a signal peptide. In terms of domain architecture, Chitin-binding type-1 spans 21 to 61 (EQCGTQAGGALCPGGLCCSKFGWCGSTSEYCGDGCQSQCSG). 4 cysteine pairs are disulfide-bonded: C23-C38, C32-C44, C37-C51, and C55-C59. E133 serves as the catalytic Proton donor. Disulfide bonds link C151–C170 and C269–C301. A propeptide spans 310–324 (SLPLSSILLDTVAAA) (removed in mature form).

It belongs to the glycosyl hydrolase 19 family. Chitinase class I subfamily.

It catalyses the reaction Random endo-hydrolysis of N-acetyl-beta-D-glucosaminide (1-&gt;4)-beta-linkages in chitin and chitodextrins.. Defense against chitin-containing fungal pathogens. This Pisum sativum (Garden pea) protein is Endochitinase A2 (CHI2).